Reading from the N-terminus, the 149-residue chain is UPF0178 protein VV1_1847 (149 aa).

The protein belongs to the UPF0178 family.

The sequence is that of UPF0178 protein VV1_1847 from Vibrio vulnificus (strain CMCP6).